The sequence spans 806 residues: Disintegrin and metalloproteinase domain-containing protein 1b (806 aa).

The signal sequence occupies residues 1–33 (MERLKLGKIPEHWCIRLVAMLLLAIIFLPSTFC). The segment at 169–188 (CSVTPKDSPGDTSHPPRSRK) is disordered. The Peptidase M12B domain maps to 203-397 (KYVEMFVVVN…HRGVCLLDEP (195 aa)). N-linked (GlcNAc...) asparagine glycosylation occurs at Asn224. Cystine bridges form between Cys313–Cys392, Cys353–Cys376, Cys355–Cys361, Cys462–Cys482, Cys635–Cys647, Cys641–Cys653, and Cys655–Cys664. Zn(2+) is bound at residue His338. Glu339 is a catalytic residue. Zn(2+)-binding residues include His342 and His348. Residues Asn375 and Asn476 are each glycosylated (N-linked (GlcNAc...) asparagine). The 85-residue stretch at 406–490 (AANCGNGVVE…ACPSDRKAQD (85 aa)) folds into the Disintegrin domain. An EGF-like domain is found at 631-665 (FSFPCSPSKQCNKHGVCNDLGNCHCSFGFAPPDCK). Positions 668–694 (GTGGSVDSGPAVNLSNDSSPGPNSTQS) are disordered. N-linked (GlcNAc...) asparagine glycans are attached at residues Asn680, Asn683, and Asn690. Polar residues predominate over residues 680-694 (NLSNDSSPGPNSTQS). Residues 705–725 (LIVLAVILVLMILLIIICIIS) form a helical membrane-spanning segment. The Cytoplasmic segment spans residues 726–806 (AYTKSETASE…KDEDEEEGEE (81 aa)). A disordered region spans residues 735 to 806 (EAGPSELEEL…KDEDEEEGEE (72 aa)). A compositionally biased stretch (acidic residues) spans 740–806 (ELEELPEGEK…KDEDEEEGEE (67 aa)).

Heterodimer with ADAM2/fertilin subunit beta. Testis.

The protein resides in the membrane. In terms of biological role, may play a role in spermatogenesis and sperm maturation. The polypeptide is Disintegrin and metalloproteinase domain-containing protein 1b (Adam1b) (Mus musculus (Mouse)).